A 403-amino-acid polypeptide reads, in one-letter code: Aminomethyltransferase, mitochondrial (403 aa).

The transit peptide at 1–28 (MQRAVSVVARLGFRLQAFPPALCRPLSC) directs the protein to the mitochondrion. Substrate is bound by residues Glu-232, Arg-261, and Tyr-399.

The protein belongs to the GcvT family. The glycine cleavage system is composed of four proteins: P, T, L and H.

The protein resides in the mitochondrion. It catalyses the reaction N(6)-[(R)-S(8)-aminomethyldihydrolipoyl]-L-lysyl-[protein] + (6S)-5,6,7,8-tetrahydrofolate = N(6)-[(R)-dihydrolipoyl]-L-lysyl-[protein] + (6R)-5,10-methylene-5,6,7,8-tetrahydrofolate + NH4(+). The glycine cleavage system catalyzes the degradation of glycine. The polypeptide is Aminomethyltransferase, mitochondrial (Homo sapiens (Human)).